A 249-amino-acid polypeptide reads, in one-letter code: Tetraspanin-7 (249 aa).

Residues 1 to 16 (MASRRMETKPVITCLK) are Cytoplasmic-facing. Residues 17-40 (TLLIIYSFVFWITGVILLAVGVWG) form a helical membrane-spanning segment. At 41–56 (KLTLGTYISLIAENST) the chain is on the extracellular side. Asparagine 54 is a glycosylation site (N-linked (GlcNAc...) asparagine). A helical transmembrane segment spans residues 57–75 (NAPYVLIGTGTTIVVFGLF). Over 76 to 86 (GCFATCRGSPW) the chain is Cytoplasmic. Residues 87-112 (MLKLYAMFLSLVFLAELVAGISGFVF) traverse the membrane as a helical segment. Residues 113 to 213 (RHEIKDTFLR…LVTSFMETNM (101 aa)) lie on the Extracellular side of the membrane. 4 N-linked (GlcNAc...) asparagine glycosylation sites follow: asparagine 155, asparagine 158, asparagine 177, and asparagine 188. Residues 214 to 234 (GIIAGVAFGIAFSQLIGMLLA) form a helical membrane-spanning segment. The Cytoplasmic portion of the chain corresponds to 235 to 249 (CCLSRFITANQYEMV).

This sequence belongs to the tetraspanin (TM4SF) family. (Microbial infection) Interacts with herpes simplex virus 1 (HHV-1) UL35. As to expression, not solely expressed in T-cells. Expressed in acute myelocytic leukemia cells of some patients.

The protein localises to the membrane. Functionally, may be involved in cell proliferation and cell motility. In Homo sapiens (Human), this protein is Tetraspanin-7 (TSPAN7).